Here is an 843-residue protein sequence, read N- to C-terminus: Envelope glycoprotein gp160 (843 aa).

Positions 1-33 (MRVREMQRNWQHLGKWGLLFLGILIICNANATD) are cleaved as a signal peptide. Asparagine 30 is a glycosylation site (N-linked (GlcNAc...) asparagine; by host). At 34 to 671 (DLWVTVYYGV…ITNWLWYIKI (638 aa)) the chain is on the extracellular side. Cysteine 55 and cysteine 75 are disulfide-bonded. Asparagine 89, asparagine 131, asparagine 136, asparagine 143, asparagine 156, asparagine 160, asparagine 186, asparagine 197, asparagine 234, asparagine 262, asparagine 276, asparagine 289, asparagine 301, asparagine 333, asparagine 338, asparagine 343, asparagine 353, and asparagine 359 each carry an N-linked (GlcNAc...) asparagine; by host glycan. 5 disulfides stabilise this stretch: cysteine 120/cysteine 205, cysteine 127/cysteine 196, cysteine 132/cysteine 157, cysteine 218/cysteine 247, and cysteine 228/cysteine 239. The interval 132 to 156 (CTDVNITMSDINGTSLKEDQGEIKN) is V1. A V2 region spans residues 157–196 (CSFNVTTELKDKKRKQQALFYRLDVEPIKNSSNIYKLISC). Residues 296-329 (CRRPNNNTRKGIRIGPGQTFFATGEIIGDIRKAY) form a V3 region. An intrachain disulfide couples cysteine 296 to cysteine 330. The CD4-binding loop stretch occupies residues 361–371 (SSGGDVEITTH). A disulfide bridge connects residues cysteine 375 and cysteine 432. Residues 382–405 (YNTSGLFNETEVANNTNENITLPC) are V4. N-linked (GlcNAc...) asparagine; by host glycosylation is found at asparagine 383, asparagine 389, asparagine 395, asparagine 400, and asparagine 435. V5 stretches follow at residues 448–458 (DIDGKEILRPI) and 450–458 (DGKEILRPI). The tract at residues 499-519 (AVGMGAVLFGFLGAAGSTMGA) is fusion peptide. The tract at residues 561–579 (KQLQARILAVERYLKDQQL) is immunosuppression. Cysteines 585 and 591 form a disulfide. Asparagine 598, asparagine 603, asparagine 612, and asparagine 624 each carry an N-linked (GlcNAc...) asparagine; by host glycan. The stretch at 620–654 (KEIDNYTKTIYSLIEDAQNQQERNEQELLALDKWD) forms a coiled coil. Positions 649 to 670 (ALDKWDSLWSWFSITNWLWYIK) are MPER; binding to GalCer. The helical transmembrane segment at 672–692 (FIMIVGGLIGLRIVFAVLSVV) threads the bilayer. The Cytoplasmic segment spans residues 693 to 843 (NRVRQGYSPL…IRQGAERFLL (151 aa)). The YXXL motif; contains endocytosis signal signature appears at 699-702 (YSPL). A disordered region spans residues 709-731 (PNPRGPDRPGGIEEEGGEPDRDR). Cysteine 751 is lipidated: S-palmitoyl cysteine; by host. The Di-leucine internalization motif signature appears at 842–843 (LL).

Belongs to the HIV-1 env protein family. As to quaternary structure, the mature envelope protein (Env) consists of a homotrimer of non-covalently associated gp120-gp41 heterodimers. The resulting complex protrudes from the virus surface as a spike. There seems to be as few as 10 spikes on the average virion. Interacts with host CD4, CCR5 and CXCR4. Gp120 also interacts with the C-type lectins CD209/DC-SIGN and CLEC4M/DC-SIGNR (collectively referred to as DC-SIGN(R)). Gp120 and gp41 interact with GalCer. Gp120 interacts with host ITGA4/ITGB7 complex; on CD4+ T-cells, this interaction results in rapid activation of integrin ITGAL/LFA-1, which facilitates efficient cell-to-cell spreading of HIV-1. Gp120 interacts with cell-associated heparan sulfate; this interaction increases virus infectivity on permissive cells and may be involved in infection of CD4- cells. In terms of assembly, the mature envelope protein (Env) consists of a homotrimer of non-covalently associated gp120-gp41 heterodimers. The resulting complex protrudes from the virus surface as a spike. There seems to be as few as 10 spikes on the average virion. Post-translationally, highly glycosylated by host. The high number of glycan on the protein is reffered to as 'glycan shield' because it contributes to hide protein sequence from adaptive immune system. In terms of processing, palmitoylation of the transmembrane protein and of Env polyprotein (prior to its proteolytic cleavage) is essential for their association with host cell membrane lipid rafts. Palmitoylation is therefore required for envelope trafficking to classical lipid rafts, but not for viral replication. Specific enzymatic cleavages in vivo yield mature proteins. Envelope glycoproteins are synthesized as an inactive precursor that is heavily N-glycosylated and processed likely by host cell furin in the Golgi to yield the mature SU and TM proteins. The cleavage site between SU and TM requires the minimal sequence [KR]-X-[KR]-R. About 2 of the 9 disulfide bonds of gp41 are reduced by P4HB/PDI, following binding to CD4 receptor.

It localises to the virion membrane. The protein resides in the host cell membrane. It is found in the host endosome membrane. Functionally, oligomerizes in the host endoplasmic reticulum into predominantly trimers. In a second time, gp160 transits in the host Golgi, where glycosylation is completed. The precursor is then proteolytically cleaved in the trans-Golgi and thereby activated by cellular furin or furin-like proteases to produce gp120 and gp41. Its function is as follows. Attaches the virus to the host lymphoid cell by binding to the primary receptor CD4. This interaction induces a structural rearrangement creating a high affinity binding site for a chemokine coreceptor like CXCR4 and/or CCR5. Acts as a ligand for CD209/DC-SIGN and CLEC4M/DC-SIGNR, which are respectively found on dendritic cells (DCs), and on endothelial cells of liver sinusoids and lymph node sinuses. These interactions allow capture of viral particles at mucosal surfaces by these cells and subsequent transmission to permissive cells. HIV subverts the migration properties of dendritic cells to gain access to CD4+ T-cells in lymph nodes. Virus transmission to permissive T-cells occurs either in trans (without DCs infection, through viral capture and transmission), or in cis (following DCs productive infection, through the usual CD4-gp120 interaction), thereby inducing a robust infection. In trans infection, bound virions remain infectious over days and it is proposed that they are not degraded, but protected in non-lysosomal acidic organelles within the DCs close to the cell membrane thus contributing to the viral infectious potential during DCs' migration from the periphery to the lymphoid tissues. On arrival at lymphoid tissues, intact virions recycle back to DCs' cell surface allowing virus transmission to CD4+ T-cells. Acts as a class I viral fusion protein. Under the current model, the protein has at least 3 conformational states: pre-fusion native state, pre-hairpin intermediate state, and post-fusion hairpin state. During fusion of viral and target intracellular membranes, the coiled coil regions (heptad repeats) assume a trimer-of-hairpins structure, positioning the fusion peptide in close proximity to the C-terminal region of the ectodomain. The formation of this structure appears to drive apposition and subsequent fusion of viral and target cell membranes. Complete fusion occurs in host cell endosomes and is dynamin-dependent, however some lipid transfer might occur at the plasma membrane. The virus undergoes clathrin-dependent internalization long before endosomal fusion, thus minimizing the surface exposure of conserved viral epitopes during fusion and reducing the efficacy of inhibitors targeting these epitopes. Membranes fusion leads to delivery of the nucleocapsid into the cytoplasm. This is Envelope glycoprotein gp160 from Homo sapiens (Human).